We begin with the raw amino-acid sequence, 39 residues long: Photosystem II reaction center protein L (39 aa).

Residues 18-38 (SLYLGLLLVFVTAVLFTSYFF) traverse the membrane as a helical segment.

It belongs to the PsbL family. PSII is composed of 1 copy each of membrane proteins PsbA, PsbB, PsbC, PsbD, PsbE, PsbF, PsbH, PsbI, PsbJ, PsbK, PsbL, PsbM, PsbT, PsbX, PsbY, Psb30/Ycf12, peripheral proteins PsbO, CyanoQ (PsbQ), PsbU, PsbV and a large number of cofactors. It forms dimeric complexes.

It localises to the cellular thylakoid membrane. One of the components of the core complex of photosystem II (PSII). PSII is a light-driven water:plastoquinone oxidoreductase that uses light energy to abstract electrons from H(2)O, generating O(2) and a proton gradient subsequently used for ATP formation. It consists of a core antenna complex that captures photons, and an electron transfer chain that converts photonic excitation into a charge separation. This subunit is found at the monomer-monomer interface and is required for correct PSII assembly and/or dimerization. The polypeptide is Photosystem II reaction center protein L (Prochlorococcus marinus (strain MIT 9313)).